Here is a 322-residue protein sequence, read N- to C-terminus: MYLPTLAASASLLVGVAHGYASPGACSGACNIHDPALIRRESDGKYFRFSTGNKISYASASSIEGPWTAIGSVLPGGSSIDLDGNDDLWAPDVQLVNGVYYVLYSVSTFGSQNSAIGLATSDTMDLNTWTDHGSTGIRSDSSKPYNAIDGNLFQDDSGTWYMNFGSFWNDIYQAQMKSPPTAVASSSYQIAYQPAGEHAVEGAYLYKYGNYYYLFFSEGKCCGYDSSRPATGEEYKIKVCRSTTATGNFVDANGVSCTSGGGTIVLESHDNVYGPGGQGVFTDPTLGPVLYYHYVDTTIGYADSQKLFGWNVLDFSSGWPVV.

The signal sequence occupies residues 1-19 (MYLPTLAASASLLVGVAHG). Asp34 serves as the catalytic Proton acceptor. The Proton donor role is filled by Glu201.

The protein belongs to the glycosyl hydrolase 43 family.

The protein localises to the secreted. The enzyme catalyses Endohydrolysis of (1-&gt;5)-alpha-arabinofuranosidic linkages in (1-&gt;5)-arabinans.. Its pathway is glycan metabolism; L-arabinan degradation. Functionally, endo-1,5-alpha-L-arabinanase involved in degradation of pectin. Its preferred substrate is linear 1,5-alpha-L-arabinan. The polypeptide is Probable arabinan endo-1,5-alpha-L-arabinosidase A (abnA) (Emericella nidulans (strain FGSC A4 / ATCC 38163 / CBS 112.46 / NRRL 194 / M139) (Aspergillus nidulans)).